We begin with the raw amino-acid sequence, 814 residues long: Acyl-coenzyme A dehydrogenase (814 aa).

Glutamate 497 acts as the Proton acceptor in catalysis.

This sequence belongs to the acyl-CoA dehydrogenase family. The cofactor is FAD.

The catalysed reaction is a medium-chain 2,3-saturated fatty acyl-CoA + oxidized [electron-transfer flavoprotein] + H(+) = a medium-chain (2E)-enoyl-CoA + reduced [electron-transfer flavoprotein]. The enzyme catalyses a long-chain 2,3-saturated fatty acyl-CoA + oxidized [electron-transfer flavoprotein] + H(+) = a long-chain (2E)-enoyl-CoA + reduced [electron-transfer flavoprotein]. The protein operates within lipid metabolism; fatty acid beta-oxidation. Catalyzes the dehydrogenation of acyl-coenzymes A (acyl-CoAs) to 2-enoyl-CoAs, the first step of the beta-oxidation cycle of fatty acid degradation. Is required for S.typhimurium to utilize medium- and long-chain fatty acids as sole carbon sources for growth. Is needed for bacterial survival during carbone-source starvation. The polypeptide is Acyl-coenzyme A dehydrogenase (fadE) (Salmonella typhimurium (strain LT2 / SGSC1412 / ATCC 700720)).